The sequence spans 224 residues: Urease accessory protein UreF (224 aa).

Belongs to the UreF family. UreD, UreF and UreG form a complex that acts as a GTP-hydrolysis-dependent molecular chaperone, activating the urease apoprotein by helping to assemble the nickel containing metallocenter of UreC. The UreE protein probably delivers the nickel.

It localises to the cytoplasm. In terms of biological role, required for maturation of urease via the functional incorporation of the urease nickel metallocenter. The chain is Urease accessory protein UreF from Citrobacter koseri (strain ATCC BAA-895 / CDC 4225-83 / SGSC4696).